The following is a 111-amino-acid chain: Iron-sulfur cluster insertion protein ErpA (111 aa).

The iron-sulfur cluster site is built by C39, C103, and C105.

It belongs to the HesB/IscA family. Homodimer. It depends on iron-sulfur cluster as a cofactor.

In terms of biological role, required for insertion of 4Fe-4S clusters for at least IspG. This chain is Iron-sulfur cluster insertion protein ErpA, found in Acinetobacter baumannii (strain SDF).